Reading from the N-terminus, the 1015-residue chain is SGGFDFSFLPQPPQEKGDGKGVGLGPGPMGLMGPRGPPGASFQGPAGEPGEPGQTGPAGARGPAGPPGKAGEDGHPGKPGRPGERGVVGPQGARGFPGTPGLPGFKGIRGHNGLDGLKGQAGAPGVKTGARGLPGERGRVGAPGPAGARGSDGSVGPVGPAGPIGSAGPPGFPGAPGPKGELGPVGNPGPAGPAGPRGEQGLPGVSGPVGPPGKGAAGLPGVAGAPGLPGPRGIPGPVGAVGATGARGLVGEPGPAGSKGESGNKGEPGSAGPQGPPGPSGEEGKRGPSGESGSTGPTGPPGLRGGPGSRGLPGADGRAGVMGPAGSRGASGPAGVRGPSGDTGRPGEPGLMGRGLPGSPGNTGPAGKEGPVGLPGIDGRPGPVGPAGPRGEAGNIGFPGPKGPTGDPGKGEKGHAGLAGNRGAPGPDGNNGAQGPPGLQGVQGGKGEQGPAGPPGFQGLPGPSGTTGEAGKPGERGIHGEFGLPGPAGPRGERGPPGESGAAGPVGPIGSRGPSGPPGPDGNKGEPGVVGAPGTAGPGSGGLPGERGAAGIPGGKGEKGETGLRGEVGTTGRDGARGAPGAVGAPGPAGATGDRGEAGAAGPAGPAGPRGSPGERGEVGPAGPNGFAGPAGAAGQPGAKGERGTKGPKGENGIVGPTGPVGAAGPSGPNGAPGPAGGRGDGGPPGLTGFPGAAGRTGPPGPSGITGPPGPPGAAGKEGLRGPRGDQGPVGRTGETGAGGPPGFAGEKGPSGEPGTAGPPGTAGPQGLLGAPGILGLPGSRGERGLPGVAGAVGEPGPLGISGPPGARGPPGAVGPGVNGAPGEAGRSDGPPGRDGLPGHKGERGYAGNAGPVGAAGAPGPHGTVGPAGKHGNRGEPGPAGSVGPVGAVGPRGPSGPQGVRGDKGEAGDKGPRGLPGLKGHNGLQGLPGLAGQHGDQGSPGPVGPAGPRGPAGPSGPAGKDGRTGHPGAVGPAGVRGSQGSQGPSGPAGPPGPPGPPGASGGGYDFGYEGDFYRA.

The disordered stretch occupies residues 1–1015 (SGGFDFSFLP…FGYEGDFYRA (1015 aa)). 4-hydroxyproline is present on residues Pro-10 and Pro-13. Over residues 20 to 30 (KGVGLGPGPMG) the composition is skewed to gly residues. A 4-hydroxyproline modification is found at Pro-38. Over residues 43–69 (QGPAGEPGEPGQTGPAGARGPAGPPGK) the composition is skewed to low complexity. Basic and acidic residues predominate over residues 70 to 84 (AGEDGHPGKPGRPGE). Lys-106 bears the 5-hydroxylysine; alternate mark. Lys-106 carries an O-linked (Gal...) hydroxylysine; alternate glycan. Low complexity-rich tracts occupy residues 140 to 169 (VGAP…SAGP), 194 to 208 (AGPR…VSGP), and 235 to 250 (PGPV…RGLV). Gly residues predominate over residues 302 to 311 (GLRGGPGSRG). A compositionally biased stretch (low complexity) spans 324 to 340 (PAGSRGASGPAGVRGPS). 4-hydroxyproline occurs at positions 346 and 349. Residues 441-450 (GVQGGKGEQG) show a composition bias toward gly residues. Residues 497–514 (PGESGAAGPVGPIGSRGP) show a composition bias toward low complexity. Gly residues predominate over residues 534 to 545 (GTAGPGSGGLPG). Composition is skewed to low complexity over residues 568 to 612 (VGTT…PRGS) and 619 to 639 (VGPA…QPGA). A compositionally biased stretch (basic and acidic residues) spans 640–649 (KGERGTKGPK). The span at 657-670 (PTGPVGAAGPSGPN) shows a compositional bias: low complexity. The span at 674-686 (GPAGGRGDGGPPG) shows a compositional bias: gly residues. A compositionally biased stretch (low complexity) spans 687–697 (LTGFPGAAGRT). Gly residues predominate over residues 734-743 (GETGAGGPPG). Low complexity-rich tracts occupy residues 751–778 (SGEP…LGLP), 786–799 (LPGV…PGPL), 846–868 (YAGN…VGPA), and 877–897 (PGPA…PSGP). Over residues 901–912 (RGDKGEAGDKGP) the composition is skewed to basic and acidic residues. Residues 987 to 997 (PAGPPGPPGPP) show a composition bias toward pro residues.

This sequence belongs to the fibrillar collagen family. In terms of assembly, trimers of one alpha 2(I) and two alpha 1(I) chains. Interacts (via C-terminus) with TMEM131 (via PapD-L domain); the interaction is direct and is involved in assembly and TRAPPIII ER-to-Golgi transport complex-dependent secretion of collagen. Prolines at the third position of the tripeptide repeating unit (G-X-Y) are hydroxylated in some or all of the chains. Expressed in bones.

The protein resides in the secreted. The protein localises to the extracellular space. It is found in the extracellular matrix. Type I collagen is a member of group I collagen (fibrillar forming collagen). The sequence is that of Collagen alpha-2(I) chain from Doedicurus sp. (South American giant glyptodont).